Consider the following 116-residue polypeptide: MALSPRESAAKRAQRVRTRLKSLANGRPRLSVFRSSKNIYAQVIDDERGVTLASASTLEAEGKGADKDAAAAVGKLVAERAIEKGVKDVVFDRGSYIFHGRVKALADAAREAGLNF.

The protein belongs to the universal ribosomal protein uL18 family. In terms of assembly, part of the 50S ribosomal subunit; part of the 5S rRNA/L5/L18/L25 subcomplex. Contacts the 5S and 23S rRNAs.

Functionally, this is one of the proteins that bind and probably mediate the attachment of the 5S RNA into the large ribosomal subunit, where it forms part of the central protuberance. The chain is Large ribosomal subunit protein uL18 from Caulobacter vibrioides (strain ATCC 19089 / CIP 103742 / CB 15) (Caulobacter crescentus).